The chain runs to 910 residues: Protein translocase subunit SecA 1 (910 aa).

ATP-binding positions include Gln-86, 104-108 (GEGKT), and Asp-512. Residues Cys-894, Cys-896, Cys-905, and His-906 each contribute to the Zn(2+) site.

It belongs to the SecA family. In terms of assembly, monomer and homodimer. Part of the essential Sec protein translocation apparatus which comprises SecA, SecYEG and auxiliary proteins SecDF-YajC and YidC. The cofactor is Zn(2+).

It is found in the cell inner membrane. The protein resides in the cytoplasm. It catalyses the reaction ATP + H2O + cellular proteinSide 1 = ADP + phosphate + cellular proteinSide 2.. Part of the Sec protein translocase complex. Interacts with the SecYEG preprotein conducting channel. Has a central role in coupling the hydrolysis of ATP to the transfer of proteins into and across the cell membrane, serving both as a receptor for the preprotein-SecB complex and as an ATP-driven molecular motor driving the stepwise translocation of polypeptide chains across the membrane. The chain is Protein translocase subunit SecA 1 from Bordetella avium (strain 197N).